A 316-amino-acid polypeptide reads, in one-letter code: Ribose-phosphate pyrophosphokinase (316 aa).

ATP is bound by residues 40–42 and 99–100; these read DGE and RQ. 2 residues coordinate Mg(2+): His133 and Asp174. Residue Lys197 is part of the active site. Residues Arg199, Asp223, and 227–231 each bind D-ribose 5-phosphate; that span reads DTAGT.

It belongs to the ribose-phosphate pyrophosphokinase family. Class I subfamily. In terms of assembly, homohexamer. Mg(2+) is required as a cofactor.

It is found in the cytoplasm. The catalysed reaction is D-ribose 5-phosphate + ATP = 5-phospho-alpha-D-ribose 1-diphosphate + AMP + H(+). Its pathway is metabolic intermediate biosynthesis; 5-phospho-alpha-D-ribose 1-diphosphate biosynthesis; 5-phospho-alpha-D-ribose 1-diphosphate from D-ribose 5-phosphate (route I): step 1/1. Its function is as follows. Involved in the biosynthesis of the central metabolite phospho-alpha-D-ribosyl-1-pyrophosphate (PRPP) via the transfer of pyrophosphoryl group from ATP to 1-hydroxyl of ribose-5-phosphate (Rib-5-P). This Fusobacterium nucleatum subsp. nucleatum (strain ATCC 25586 / DSM 15643 / BCRC 10681 / CIP 101130 / JCM 8532 / KCTC 2640 / LMG 13131 / VPI 4355) protein is Ribose-phosphate pyrophosphokinase.